The following is a 383-amino-acid chain: Plant intracellular Ras-group-related LRR protein 8 (383 aa).

10 LRR repeats span residues 56–79 (RQNI…SINL), 80–102 (ASIS…LVAR), 104–126 (LNLW…IGCL), 127–149 (SKLK…IEDC), 151–173 (SLEE…GFEL), 174–197 (TNLT…SYLT), 199–219 (LRVL…LENL), 221–244 (NLQV…VGLL), 245–268 (ISLV…GCLR), and 270–290 (IQKL…VVEQ). A GVYW; degenerate motif is present at residues 291-298 (GLEALKQY).

The protein belongs to the SHOC2 family. As to expression, widely expressed except flowers.

Functionally, leucine-rich repeat protein that likely mediates protein interactions, possibly in the context of signal transduction. This is Plant intracellular Ras-group-related LRR protein 8 (PIRL8) from Arabidopsis thaliana (Mouse-ear cress).